We begin with the raw amino-acid sequence, 243 residues long: DNA repair protein RecO (243 aa).

It belongs to the RecO family.

Involved in DNA repair and RecF pathway recombination. This is DNA repair protein RecO from Hyphomonas neptunium (strain ATCC 15444).